Consider the following 245-residue polypeptide: Orotidine 5'-phosphate decarboxylase (245 aa).

Residues Asp22, Lys44, 71-80 (DLKFHDIPNT), Thr131, Arg192, Gln201, Gly221, and Arg222 each bind substrate. Lys73 acts as the Proton donor in catalysis.

The protein belongs to the OMP decarboxylase family. Type 1 subfamily. As to quaternary structure, homodimer.

It catalyses the reaction orotidine 5'-phosphate + H(+) = UMP + CO2. Its pathway is pyrimidine metabolism; UMP biosynthesis via de novo pathway; UMP from orotate: step 2/2. Functionally, catalyzes the decarboxylation of orotidine 5'-monophosphate (OMP) to uridine 5'-monophosphate (UMP). This is Orotidine 5'-phosphate decarboxylase from Shigella flexneri.